The primary structure comprises 404 residues: Probable sugar efflux transporter (404 aa).

Transmembrane regions (helical) follow at residues 15–35 (VITF…PVAL), 51–71 (GLII…FMLL), 85–105 (LVLF…WVLV), 109–129 (IGVA…VIRV), 137–157 (QAIG…LPLG), 168–188 (ATFA…YQLL), 209–229 (PLLL…FTAY), 245–265 (SMAT…SLLF), 276–296 (FILF…IASQ), 299–319 (WTMF…GLGL), 333–353 (VAMA…ALLG), and 363–383 (AYIG…FILV).

It belongs to the major facilitator superfamily. SotB (TC 2.A.1.2) family.

The protein resides in the cell inner membrane. Functionally, involved in the efflux of sugars. The physiological role may be the reduction of the intracellular concentration of toxic sugars or sugar metabolites. This Pasteurella multocida (strain Pm70) protein is Probable sugar efflux transporter.